Reading from the N-terminus, the 54-residue chain is Preprotein translocase subunit SecG (54 aa).

The Cytoplasmic segment spans residues 1–30; it reads MSKNKQDAGLSTSAGLVRYMDEDASKIKIA. Residues 31 to 52 traverse the membrane as a helical segment; that stretch reads PEKVLGITISIMVLLFILNYGL. Residues 53 to 54 are Extracellular-facing; sequence LA.

Belongs to the SEC61-beta family. As to quaternary structure, component of the protein translocase complex. Heterotrimer consisting of alpha (SecY), beta (SecG) and gamma (SecE) subunits. Can form oligomers of the heterotrimer.

It is found in the cell membrane. Its function is as follows. Involved in protein export. The function of the beta subunit is unknown, but it may be involved in stabilization of the trimeric complex. The chain is Preprotein translocase subunit SecG from Methanococcus aeolicus (strain ATCC BAA-1280 / DSM 17508 / OCM 812 / Nankai-3).